Here is a 107-residue protein sequence, read N- to C-terminus: Large ribosomal subunit protein uL24 (107 aa).

Belongs to the universal ribosomal protein uL24 family. In terms of assembly, part of the 50S ribosomal subunit.

One of two assembly initiator proteins, it binds directly to the 5'-end of the 23S rRNA, where it nucleates assembly of the 50S subunit. Its function is as follows. One of the proteins that surrounds the polypeptide exit tunnel on the outside of the subunit. The polypeptide is Large ribosomal subunit protein uL24 (Neisseria meningitidis serogroup C (strain 053442)).